A 151-amino-acid chain; its full sequence is Macrodomain Ter protein (151 aa).

It belongs to the MatP family. In terms of assembly, homodimer.

Its subcellular location is the cytoplasm. Its function is as follows. Required for spatial organization of the terminus region of the chromosome (Ter macrodomain) during the cell cycle. Prevents early segregation of duplicated Ter macrodomains during cell division. Binds specifically to matS, which is a 13 bp signature motif repeated within the Ter macrodomain. This is Macrodomain Ter protein from Enterobacter sp. (strain 638).